Consider the following 907-residue polypeptide: Protein translocase subunit SecA (907 aa).

Residues Gln-86, 104-108 (GEGKT), and Asp-511 each bind ATP. Composition is skewed to basic and acidic residues over residues 838 to 856 (AQEEWKESMSEIKAEHESV) and 869 to 888 (EEAPKVQQVKREGPKIKRND). The tract at residues 838-907 (AQEEWKESMS…YKQCHGKVVD (70 aa)) is disordered. 4 residues coordinate Zn(2+): Cys-890, Cys-892, Cys-901, and His-902. Over residues 896-907 (KKYKQCHGKVVD) the composition is skewed to basic residues.

The protein belongs to the SecA family. In terms of assembly, monomer and homodimer. Part of the essential Sec protein translocation apparatus which comprises SecA, SecYEG and auxiliary proteins SecDF-YajC and YidC. Zn(2+) serves as cofactor.

The protein localises to the cell inner membrane. Its subcellular location is the cytoplasm. The catalysed reaction is ATP + H2O + cellular proteinSide 1 = ADP + phosphate + cellular proteinSide 2.. In terms of biological role, part of the Sec protein translocase complex. Interacts with the SecYEG preprotein conducting channel. Has a central role in coupling the hydrolysis of ATP to the transfer of proteins into and across the cell membrane, serving both as a receptor for the preprotein-SecB complex and as an ATP-driven molecular motor driving the stepwise translocation of polypeptide chains across the membrane. The protein is Protein translocase subunit SecA of Francisella philomiragia subsp. philomiragia (strain ATCC 25017 / CCUG 19701 / FSC 153 / O#319-036).